The primary structure comprises 304 residues: Bifunctional protein FolD (304 aa).

NADP(+) is bound by residues glycine 176–serine 178, isoleucine 201, and isoleucine 242.

This sequence belongs to the tetrahydrofolate dehydrogenase/cyclohydrolase family. Homodimer.

It carries out the reaction (6R)-5,10-methylene-5,6,7,8-tetrahydrofolate + NADP(+) = (6R)-5,10-methenyltetrahydrofolate + NADPH. The enzyme catalyses (6R)-5,10-methenyltetrahydrofolate + H2O = (6R)-10-formyltetrahydrofolate + H(+). The protein operates within one-carbon metabolism; tetrahydrofolate interconversion. In terms of biological role, catalyzes the oxidation of 5,10-methylenetetrahydrofolate to 5,10-methenyltetrahydrofolate and then the hydrolysis of 5,10-methenyltetrahydrofolate to 10-formyltetrahydrofolate. The polypeptide is Bifunctional protein FolD (Gluconobacter oxydans (strain 621H) (Gluconobacter suboxydans)).